Here is a 440-residue protein sequence, read N- to C-terminus: MSKKVSASYIIIIGLMLFALFFGAGNLIFPPMLGQLAGKNVWVANAGFLVTGVGLPLLAITAFVFSGKQNLQSLASRVHPVFGIVFTTILYLAIGPFFAIPRSGNVSFEIGVKPFLSNDASPVSLIIFTILFFALACLLSLNPSKIIDIVGKFLTPIKLTFIGLLVAVALIRPIGTIQAPSKGYTSQAFFKGFQEGYLTLDALVAFVFGIIIVNALKEQGASTKKQLIVVCAKAAAIAAVLLAVMYTALSYMGASSVEELGILENGAEVLAKVSSYYFGSYGSILLGLMITVACLTTSVGLITACSSFFHELFPNISYKKIAVVLSVFSTLVANIGLTQLIKVSMPVLLTMYPIAISLIFLTFLHSVFKGKTEVYQGSLLFAFIISLFDGLKAAGIKIEVVNRIFTQILPMYNIGLGWLIPAIAGGICGYILSIFRTKTS.

12 consecutive transmembrane segments (helical) span residues 9 to 29, 46 to 66, 80 to 100, 121 to 141, 149 to 169, 196 to 216, 227 to 247, 284 to 304, 321 to 341, 348 to 368, 378 to 398, and 414 to 434; these read YIII…NLIF, AGFL…FVFS, PVFG…FFAI, SPVS…LLSL, IVGK…VAVA, GYLT…VNAL, LIVV…VMYT, ILLG…LITA, IAVV…TQLI, LLTM…HSVF, SLLF…GIKI, and IGLG…ILSI.

Belongs to the branched chain amino acid transporter family.

The protein resides in the cell membrane. Its function is as follows. Branched-chain amino acid transport system which is involved in the uptake of isoleucine and valine. Probably does not transport leucine. Together with BcaP and BraB, plays an important role in the activation of CodY, a branched-chain amino acid-responsive transcriptional regulator that controls the expression of several dozen transcription units in B.subtilis. The chain is Branched-chain amino acid permease BrnQ from Bacillus subtilis (strain 168).